We begin with the raw amino-acid sequence, 1211 residues long: Diacylglycerol kinase 1 (1211 aa).

Positions 174-244 are disordered; sequence HHSLGGHLSH…RNSSKKSSNS (71 aa). Residues 197 to 230 are compositionally biased toward polar residues; that stretch reads VTPSPLASGPSMFQASNPARRSVDSSPSHSATNH. A compositionally biased stretch (low complexity) spans 231-244; that stretch reads SQMSRNSSKKSSNS. EF-hand domains lie at 286 to 321 and 331 to 366; these read RPED…MMAV and ELRP…TIPL. Residues Asp-299, Asp-301, Asn-303, Glu-310, Asp-344, Asp-346, Asp-348, Thr-350, and Glu-355 each contribute to the Ca(2+) site. Phorbol-ester/DAG-type zinc fingers lie at residues 382–432 and 449–498; these read IHVW…PASC and LHHW…KKEC. The region spanning 548-682 is the DAGKc domain; the sequence is ELSCPLLVFV…LDRWSIEVTN (135 aa). Disordered regions lie at residues 789-841, 874-893, and 910-958; these read TLRT…ETEK, AATA…QRNK, and DHED…QQQQ. Residues 795–805 show a composition bias toward low complexity; sequence SSSSSNTSSGS. Positions 826–841 are enriched in basic and acidic residues; that stretch reads DVREKSVPRRSGETEK. Positions 879–893 are enriched in polar residues; it reads PVGSNQSDNSSQRNK. The span at 931-958 shows a compositional bias: low complexity; sequence NSIPATPATPITPTTPNAASSVLQQQQQ.

It belongs to the eukaryotic diacylglycerol kinase family. In terms of tissue distribution, in 10-11 hours embryos, expression is abundant in a limited number of cells in the procephalic region and in the ventral nerve cord. Predominantly expressed in the adult nervous system and muscle: including compound eyes, brain cortex, fibrillar muscle, and tubular muscle.

It catalyses the reaction a 1,2-diacyl-sn-glycerol + ATP = a 1,2-diacyl-sn-glycero-3-phosphate + ADP + H(+). In terms of biological role, upon cell stimulation converts the second messenger diacylglycerol into phosphatidate, initiating the resynthesis of phosphatidylinositols and attenuating protein kinase C activity. May have a role in the development of the embryonic nervous system and the function of the adult nervous system and muscle; regulating signal transduction in neurons. The polypeptide is Diacylglycerol kinase 1 (Dgk) (Drosophila melanogaster (Fruit fly)).